The following is a 393-amino-acid chain: Protein TsgA (393 aa).

The next 12 helical transmembrane spans lie at 11 to 31 (WISFLSYALTGALVIVTGMVM), 51 to 71 (FLNAGILISIFLNAWLMEIVP), 78 to 98 (FGFLLMVLAVAGLMFSHSLAL), 101 to 121 (AAMFILGVVSGITMSIGTFLI), 134 to 154 (LLFTDSFFSMAGMIFPMIAAF), 162 to 182 (WYWVYACIGLVYVAIFILTFG), 206 to 226 (IGVLFLSVAALCYILGQLGFI), 245 to 265 (TLVSNFWMSYMVGMWAFSFIL), 273 to 293 (ILTVLAGLAAILMYVFNTGTP), 297 to 317 (AWSILTLGFFSSAIYTTIITL), 332 to 352 (FVLTCGTIGTMLTFVVTGPIV), and 361 to 381 (LLTANGLYAVVFVMCFLLGFV).

This sequence belongs to the major facilitator superfamily. TsgA family.

It is found in the cell inner membrane. The sequence is that of Protein TsgA from Shigella dysenteriae serotype 1 (strain Sd197).